Here is a 413-residue protein sequence, read N- to C-terminus: Sporulation-specific protein 74 (413 aa).

Residues 1–87 are disordered; it reads MGAGTLLNGL…SEHTDDFNDG (87 aa). A compositionally biased stretch (basic and acidic residues) spans 69 to 83; it reads HENKDIHERSEHTDD.

As to quaternary structure, interacts with itself. Interacts with MPC54, NUD1 and SPO21/MPC70.

Its subcellular location is the cytoplasm. The protein localises to the cytoskeleton. It localises to the microtubule organizing center. The protein resides in the spindle pole body. In terms of biological role, involved in the pathway that organizes the shaping and sizing of the prospore membrane (PSM) during sporulation. Probable component of a core structural unit of the scaffold that initiates synthesis of the prospore membrane. In Saccharomyces cerevisiae (strain ATCC 204508 / S288c) (Baker's yeast), this protein is Sporulation-specific protein 74 (SPO74).